Consider the following 241-residue polypeptide: Probable histone-lysine N-methyltransferase set-23 (241 aa).

The region spanning 25 to 85 is the Pre-SET domain; the sequence is QGCDCETQCS…SCRNKVVQNG (61 aa). Positions 27, 29, 33, 39, 41, 64, 68, 70, and 77 each coordinate Zn(2+). One can recognise an SET domain in the interval 88–210; sequence KKLKIFSTSE…VGEELSYDYG (123 aa). Residues 98–100, Asp-138, Tyr-140, Arg-167, and 170–171 each bind S-adenosyl-L-methionine; these read KGD and NH. 4 residues coordinate Zn(2+): Cys-173, Cys-222, Cys-224, and Cys-229. The Post-SET domain occupies 218–234; it reads NRKLCLCRSENCRKYLP.

The protein belongs to the class V-like SAM-binding methyltransferase superfamily. Histone-lysine methyltransferase family. Suvar3-9 subfamily.

The protein localises to the nucleus. Its subcellular location is the chromosome. The enzyme catalyses L-lysyl-[histone] + S-adenosyl-L-methionine = N(6)-methyl-L-lysyl-[histone] + S-adenosyl-L-homocysteine + H(+). Its function is as follows. Probable histone methyltransferase required for embryonic development. The sequence is that of Probable histone-lysine N-methyltransferase set-23 from Caenorhabditis briggsae.